A 910-amino-acid chain; its full sequence is Epithelial discoidin domain-containing receptor 1 (910 aa).

The signal sequence occupies residues 1-19 (MGTGTLSSLLLLLLLVTIG). Residues 22–414 (DMKGHFDPAK…VAKAEGSPTA (393 aa)) lie on the Extracellular side of the membrane. In terms of domain architecture, F5/8 type C spans 32–186 (CRYALGMQDR…VCLRVELYGC (155 aa)). Disulfide bonds link Cys-32-Cys-186 and Cys-75-Cys-178. The interval 193–368 (LSYTAPVGQT…LFSEISFISD (176 aa)) is DS-like domain. Asn-212, Gln-231, Asp-234, Val-236, Tyr-254, and Tyr-256 together coordinate Ca(2+). The N-linked (GlcNAc...) asparagine glycan is linked to Asn-212. The N-linked (GlcNAc...) asparagine glycan is linked to Asn-261. Cys-304 and Cys-349 are oxidised to a cystine. Ser-361 and Glu-362 together coordinate Ca(2+). 2 N-linked (GlcNAc...) asparagine glycosylation sites follow: Asn-371 and Asn-391. The helical transmembrane segment at 415 to 435 (ILIGCLVAIILLLLLIIALML) threads the bilayer. Topologically, residues 436 to 910 (WRLHWRRLLS…FLADDALNTV (475 aa)) are cytoplasmic. The segment at 467-494 (ILINNRPGPREPPPYQEPRPRGTPTHSA) is disordered. The PPxY motif motif lies at 478-481 (PPPY). Residues Tyr-481, Tyr-510, and Tyr-517 each carry the phosphotyrosine; by autocatalysis modification. The 296-residue stretch at 607–902 (LRFKEKLGEG…PPFSQLHRFL (296 aa)) folds into the Protein kinase domain. ATP contacts are provided by residues 613-621 (LGEGQFGEV) and Lys-652. Tyr-737 is modified (phosphotyrosine; by autocatalysis). The active-site Proton acceptor is the Asp-763. A phosphotyrosine; by autocatalysis mark is found at Tyr-789, Tyr-793, and Tyr-794.

Belongs to the protein kinase superfamily. Tyr protein kinase family. Insulin receptor subfamily. Homodimer. Interacts (via PPxY motif) with WWC1 (via WW domains) in a collagen-regulated manner. Forms a tripartite complex with WWC1 and PRKCZ, but predominantly in the absence of collagen. Interacts (tyrosine phosphorylated) with SHC1. Interacts with SRC. Interacts with MYH9. Interacts with CDH1. Interacts with PTPN11. Interacts with NCK2. In terms of processing, autophosphorylated in response to fibrillar collagen binding. As to expression, various embryonic and adult tissues; also proliferative zones of the developing brain; hippocampal neurons.

It is found in the cell membrane. It carries out the reaction L-tyrosyl-[protein] + ATP = O-phospho-L-tyrosyl-[protein] + ADP + H(+). Its function is as follows. Tyrosine kinase that functions as a cell surface receptor for fibrillar collagen and regulates cell attachment to the extracellular matrix, remodeling of the extracellular matrix, cell migration, differentiation, survival and cell proliferation. Collagen binding triggers a signaling pathway that involves SRC and leads to the activation of MAP kinases. Regulates remodeling of the extracellular matrix by up-regulation of the matrix metalloproteinases MMP2, MMP7 and MMP9, and thereby facilitates cell migration and wound healing. Promotes smooth muscle cell migration, and thereby contributes to arterial wound healing. Also plays a role in tumor cell invasion. Phosphorylates PTPN11. Required for normal blastocyst implantation during pregnancy, for normal mammary gland differentiation and normal lactation. Required for normal ear morphology and normal hearing. The chain is Epithelial discoidin domain-containing receptor 1 (Ddr1) from Rattus norvegicus (Rat).